A 246-amino-acid polypeptide reads, in one-letter code: Pyridoxine 5'-phosphate synthase (246 aa).

Asparagine 7 contacts 3-amino-2-oxopropyl phosphate. A 1-deoxy-D-xylulose 5-phosphate-binding site is contributed by 9–10 (DH). Position 18 (arginine 18) interacts with 3-amino-2-oxopropyl phosphate. Histidine 43 functions as the Proton acceptor in the catalytic mechanism. Residues arginine 45 and histidine 50 each coordinate 1-deoxy-D-xylulose 5-phosphate. The active-site Proton acceptor is the glutamate 70. Threonine 100 is a 1-deoxy-D-xylulose 5-phosphate binding site. The active-site Proton donor is the histidine 190. 3-amino-2-oxopropyl phosphate contacts are provided by residues glycine 191 and 212–213 (GH).

This sequence belongs to the PNP synthase family. In terms of assembly, homooctamer; tetramer of dimers.

The protein resides in the cytoplasm. It catalyses the reaction 3-amino-2-oxopropyl phosphate + 1-deoxy-D-xylulose 5-phosphate = pyridoxine 5'-phosphate + phosphate + 2 H2O + H(+). It participates in cofactor biosynthesis; pyridoxine 5'-phosphate biosynthesis; pyridoxine 5'-phosphate from D-erythrose 4-phosphate: step 5/5. Its function is as follows. Catalyzes the complicated ring closure reaction between the two acyclic compounds 1-deoxy-D-xylulose-5-phosphate (DXP) and 3-amino-2-oxopropyl phosphate (1-amino-acetone-3-phosphate or AAP) to form pyridoxine 5'-phosphate (PNP) and inorganic phosphate. This Prochlorococcus marinus (strain SARG / CCMP1375 / SS120) protein is Pyridoxine 5'-phosphate synthase.